A 343-amino-acid chain; its full sequence is Inositol 2-dehydrogenase 1 (343 aa).

Belongs to the Gfo/Idh/MocA family. As to quaternary structure, homotetramer.

It catalyses the reaction myo-inositol + NAD(+) = scyllo-inosose + NADH + H(+). Its function is as follows. Involved in the oxidation of myo-inositol (MI) to 2-keto-myo-inositol (2KMI or 2-inosose). This is Inositol 2-dehydrogenase 1 from Mycolicibacterium vanbaalenii (strain DSM 7251 / JCM 13017 / BCRC 16820 / KCTC 9966 / NRRL B-24157 / PYR-1) (Mycobacterium vanbaalenii).